A 219-amino-acid chain; its full sequence is Octanoyltransferase (219 aa).

The 176-residue stretch at 32-207 folds into the BPL/LPL catalytic domain; sequence ASSPDQLWIV…TFSHNLGYQN (176 aa). Substrate is bound by residues 71-78, 138-140, and 151-153; these read RGGQVTYH, SLG, and GLA. Cysteine 169 functions as the Acyl-thioester intermediate in the catalytic mechanism.

This sequence belongs to the LipB family.

It is found in the cytoplasm. It catalyses the reaction octanoyl-[ACP] + L-lysyl-[protein] = N(6)-octanoyl-L-lysyl-[protein] + holo-[ACP] + H(+). The protein operates within protein modification; protein lipoylation via endogenous pathway; protein N(6)-(lipoyl)lysine from octanoyl-[acyl-carrier-protein]: step 1/2. Functionally, catalyzes the transfer of endogenously produced octanoic acid from octanoyl-acyl-carrier-protein onto the lipoyl domains of lipoate-dependent enzymes. Lipoyl-ACP can also act as a substrate although octanoyl-ACP is likely to be the physiological substrate. This is Octanoyltransferase from Shewanella sediminis (strain HAW-EB3).